Consider the following 407-residue polypeptide: Inactive non-canonical poly(A) RNA polymerase protein Trf4-2 (407 aa).

Mg(2+) contacts are provided by Asp-85 and Asp-87. Residues Leu-221–Asn-280 form the PAP-associated domain. The segment at Leu-354–Asp-390 is disordered. Residues Pro-357–Ala-371 are compositionally biased toward low complexity.

The protein belongs to the DNA polymerase type-B-like family.

The chain is Inactive non-canonical poly(A) RNA polymerase protein Trf4-2 from Drosophila melanogaster (Fruit fly).